Consider the following 188-residue polypeptide: Elongation factor P-like protein (188 aa).

This sequence belongs to the elongation factor P family.

This chain is Elongation factor P-like protein, found in Vibrio cholerae serotype O1 (strain ATCC 39541 / Classical Ogawa 395 / O395).